The primary structure comprises 140 residues: MTRRSKMRDLVFKVIFQNEFRNDSIETVLEDILHISKSGLMKADITRYVKGIYENLPSIDEKISLCLENWSLQRLSLVDRSILRLATYELLYESDVPIEVTLDEAVEIAKKYGTENSSKFVNGVLDKVAKSFAPEEKRYI.

It belongs to the NusB family.

In terms of biological role, involved in transcription antitermination. Required for transcription of ribosomal RNA (rRNA) genes. Binds specifically to the boxA antiterminator sequence of the ribosomal RNA (rrn) operons. In Pseudothermotoga lettingae (strain ATCC BAA-301 / DSM 14385 / NBRC 107922 / TMO) (Thermotoga lettingae), this protein is Transcription antitermination protein NusB.